The primary structure comprises 338 residues: Cytochrome f (338 aa).

A signal peptide spans 1–45 (MNFKVCSFPSRRQSIAAFVRVLMVILLTLGALVSSDVLLPQPAAA). Heme is bound by residues Tyr-46, Cys-66, Cys-69, and His-70. A helical transmembrane segment spans residues 300 to 316 (IAFLAAITLTQILLVLK).

This sequence belongs to the cytochrome f family. As to quaternary structure, the 4 large subunits of the cytochrome b6-f complex are cytochrome b6, subunit IV (17 kDa polypeptide, PetD), cytochrome f and the Rieske protein, while the 4 small subunits are PetG, PetL, PetM and PetN. The complex functions as a dimer. Requires heme as cofactor.

It localises to the cellular thylakoid membrane. Its function is as follows. Component of the cytochrome b6-f complex, which mediates electron transfer between photosystem II (PSII) and photosystem I (PSI), cyclic electron flow around PSI, and state transitions. In Leptolyngbya laminosa (Phormidium laminosum), this protein is Cytochrome f (petA).